The chain runs to 4241 residues: Intermembrane lipid transfer protein vps13E (4241 aa).

The region spanning 5-97 (ILPGLLKKIL…GPKDIINTFS (93 aa)) is the Chorein N-terminal domain. Residues 120 to 140 (IDSNSNNNNKKNAPSSSSSND) are compositionally biased toward low complexity. 8 disordered regions span residues 120-143 (IDSN…DDFF), 234-340 (LSKN…QQQQ), 942-986 (LGTG…VEKE), 1220-1256 (NNNN…NQKP), 1345-1369 (TTTT…QNRH), 1534-1571 (KPSS…YNNN), 2148-2192 (QQQQ…PNVH), and 2217-2282 (VTEK…NNIN). Positions 234-254 (LSKNTSTHQQQQPTFNPYVGS) are enriched in polar residues. The span at 255–264 (QQQQQQQPQQ) shows a compositional bias: low complexity. Positions 279–289 (FMNNKNSDEGI) are enriched in polar residues. Composition is skewed to low complexity over residues 290-313 (SSSS…LNDN), 325-340 (QPTP…QQQQ), and 942-952 (LGTGNGINNNN). Positions 968-986 (DDGKYPEQDDLDDSKVEKE) are enriched in basic and acidic residues. Low complexity predominate over residues 1220–1253 (NNNNNNNNNNNNNNNNNNNNNRNLNNNNNNNNNN). A compositionally biased stretch (basic residues) spans 1352–1369 (RYHHQNHHNHQHKKQNRH). 3 stretches are compositionally biased toward low complexity: residues 1538–1551 (KDNN…NNSD), 1559–1571 (DSSS…YNNN), and 2148–2177 (QQQQ…NNNN). Residues 2178–2188 (VSGNTINNKSV) are compositionally biased toward polar residues. Residues 2246–2259 (SDDDDDEGEDEDIG) are compositionally biased toward acidic residues. Positions 2265 to 2282 (DHSTSSAPTSRSNYNNIN) are enriched in polar residues. The region spanning 2825–3134 (KIVFYNQYWI…IPYVWDLPLE (310 aa)) is the SHR-BD domain. 3 disordered regions span residues 3973–4000 (PTTT…YPTE), 4059–4094 (YQHS…RQLQ), and 4109–4140 (KSMA…SGSG). The segment covering 3974–3984 (TTTTTTNTTTT) has biased composition (low complexity). Over residues 3985 to 4000 (PYQSSQNIHSTPYPTE) the composition is skewed to polar residues. Residues 4128–4140 (SNNRLSLTPSGSG) are compositionally biased toward polar residues.

This sequence belongs to the VPS13 family.

It is found in the membrane. In terms of biological role, mediates the transfer of lipids between membranes at organelle contact sites. This is Intermembrane lipid transfer protein vps13E (vps13E) from Dictyostelium discoideum (Social amoeba).